Reading from the N-terminus, the 60-residue chain is DNA gyrase inhibitor YacG (60 aa).

4 residues coordinate Zn(2+): Cys-15, Cys-18, Cys-30, and Cys-34.

Belongs to the DNA gyrase inhibitor YacG family. In terms of assembly, interacts with GyrB. Requires Zn(2+) as cofactor.

Functionally, inhibits all the catalytic activities of DNA gyrase by preventing its interaction with DNA. Acts by binding directly to the C-terminal domain of GyrB, which probably disrupts DNA binding by the gyrase. The protein is DNA gyrase inhibitor YacG of Bradyrhizobium diazoefficiens (strain JCM 10833 / BCRC 13528 / IAM 13628 / NBRC 14792 / USDA 110).